The primary structure comprises 118 residues: Basic phospholipase A2 PA-15 (118 aa).

7 cysteine pairs are disulfide-bonded: Cys11-Cys71, Cys27-Cys117, Cys29-Cys45, Cys44-Cys98, Cys51-Cys91, Cys60-Cys84, and Cys78-Cys89. The Ca(2+) site is built by Tyr28, Gly30, and Gly32. The active site involves His48. Ca(2+) is bound at residue Asp49. Asp92 is a catalytic residue.

Belongs to the phospholipase A2 family. Group I subfamily. D49 sub-subfamily. Ca(2+) is required as a cofactor. In terms of tissue distribution, expressed by the venom gland.

Its subcellular location is the secreted. It carries out the reaction a 1,2-diacyl-sn-glycero-3-phosphocholine + H2O = a 1-acyl-sn-glycero-3-phosphocholine + a fatty acid + H(+). Its function is as follows. PLA2 catalyzes the calcium-dependent hydrolysis of the 2-acyl groups in 3-sn-phosphoglycerides. This chain is Basic phospholipase A2 PA-15, found in Pseudechis australis (Mulga snake).